The following is a 258-amino-acid chain: Regulatory protein RecX (258 aa).

Belongs to the RecX family.

The protein resides in the cytoplasm. Modulates RecA activity. In Streptococcus pneumoniae (strain JJA), this protein is Regulatory protein RecX.